Reading from the N-terminus, the 310-residue chain is uncharacterized protein (310 aa).

Disordered regions lie at residues 1–53 (MSNK…NKEM), 78–127 (PIEN…TITN), and 153–217 (QQPL…SQML). A compositionally biased stretch (acidic residues) spans 11–25 (GEEDEEEDDLYDDYD). 2 stretches are compositionally biased toward polar residues: residues 37 to 49 (STSM…NISL) and 78 to 88 (PIENINENPSP). Composition is skewed to low complexity over residues 94–126 (QTQQ…TTIT), 164–184 (PSPI…QYIT), and 192–208 (YQPI…QIPT). Positions 268-299 (DLIKSVQHNIRQYNDDILTLEEKLEQTEWSLQ) form a coiled coil.

This is an uncharacterized protein from Dictyostelium discoideum (Social amoeba).